A 309-amino-acid chain; its full sequence is Olfactory receptor 1A1 (309 aa).

The Extracellular segment spans residues 1 to 25; that stretch reads MRENNQSSTLEFILLGVTGQQEQED. Residue Asn-5 is glycosylated (N-linked (GlcNAc...) asparagine). Residues 26-49 traverse the membrane as a helical segment; it reads FFYILFLFIYPITLIGNLLIVLAI. Topologically, residues 50–57 are cytoplasmic; the sequence is CSDVHLHN. Residues 58 to 79 form a helical membrane-spanning segment; it reads PMYFLLANLSLVDIFFSSVTIP. Over 80–100 the chain is Extracellular; the sequence is KMLANHLSGSKSISFGGCLTQ. A disulfide bond links Cys-97 and Cys-189. A helical transmembrane segment spans residues 101–120; the sequence is MYFMIDLGNTDSYTLAAMAY. Over 121-139 the chain is Cytoplasmic; the sequence is DRAVAISRPLHYTTIMSPR. The chain crosses the membrane as a helical span at residues 140-158; sequence SCIWLIAGSWVIGNANALP. The Extracellular segment spans residues 159–195; it reads HTLLTASLSFCGNQEVANFYCDITPLLKLSCSDIHFH. A helical transmembrane segment spans residues 196-218; the sequence is VKMMYLGVGIFSVPLLCIIVSYI. Residues 219–235 lie on the Cytoplasmic side of the membrane; that stretch reads RVFSTVFQVPSTKGVLK. Residues 236 to 258 traverse the membrane as a helical segment; the sequence is AFSTCGSHLTVVSLYYGTVMGMY. At 259–270 the chain is on the extracellular side; it reads FRPLTNYSLKDA. Asn-264 carries an N-linked (GlcNAc...) asparagine glycan. Residues 271–290 form a helical membrane-spanning segment; sequence VITVMCTAVTPMLNPFIYSL. At 291–309 the chain is on the cytoplasmic side; sequence RNRDMKAALQKLFNKRISS.

Belongs to the G-protein coupled receptor 1 family.

It localises to the cell membrane. Its function is as follows. Odorant receptor. This Gorilla gorilla gorilla (Western lowland gorilla) protein is Olfactory receptor 1A1 (OR1A1).